The sequence spans 144 residues: MTIERTLSIIKPNAIKNNALGTIIHRFISANFNIIGMKMLHLTKAQAKGFYTEHQHKSFFNDLINFMISGPIVVLVLESPDAIRRNRDIIGATNPVDAIAGTLRADYADSLIENAVHGSDSLTAAMREINYFFLAGEVYGSMYQ.

6 residues coordinate ATP: Lys11, Phe59, Arg87, Thr93, Arg104, and Asn114. The active-site Pros-phosphohistidine intermediate is His117.

This sequence belongs to the NDK family. Homotetramer. Mg(2+) serves as cofactor.

It is found in the cytoplasm. The catalysed reaction is a 2'-deoxyribonucleoside 5'-diphosphate + ATP = a 2'-deoxyribonucleoside 5'-triphosphate + ADP. It catalyses the reaction a ribonucleoside 5'-diphosphate + ATP = a ribonucleoside 5'-triphosphate + ADP. Major role in the synthesis of nucleoside triphosphates other than ATP. The ATP gamma phosphate is transferred to the NDP beta phosphate via a ping-pong mechanism, using a phosphorylated active-site intermediate. This Baumannia cicadellinicola subsp. Homalodisca coagulata protein is Nucleoside diphosphate kinase.